The sequence spans 474 residues: Gamma-aminobutyric acid receptor subunit beta-1 (474 aa).

Positions 1 to 25 (MWTVQNRESLGLLSFPVMVAMVCCA) are cleaved as a signal peptide. The Extracellular segment spans residues 26–245 (HSSNEPSNMS…SFRLKRNIGY (220 aa)). N-linked (GlcNAc...) asparagine glycans are attached at residues Asn-33 and Asn-105. Tyr-122 serves as a coordination point for histamine. A disulfide bridge connects residues Cys-161 and Cys-175. N-linked (GlcNAc...) asparagine glycosylation is present at Asn-174. Residues 181-182 (SY) and Thr-227 contribute to the histamine site. 4-aminobutanoate is bound by residues Tyr-182 and Thr-227. 3 consecutive transmembrane segments (helical) span residues 246 to 267 (FILQ…SFWI), 271 to 293 (ASAA…STHL), and 305 to 327 (AIDI…YAFV). Residues 328–451 (NYIFFGKGPQ…DLTDVNSIDK (124 aa)) lie on the Cytoplasmic side of the membrane. A helical transmembrane segment spans residues 452–473 (WSRMFFPITFSLFNVVYWLYYV).

It belongs to the ligand-gated ion channel (TC 1.A.9) family. Gamma-aminobutyric acid receptor (TC 1.A.9.5) subfamily. GABRB1 sub-subfamily. In terms of assembly, heteropentamer, formed by a combination of alpha (GABRA1-6), beta (GABRB1-3), gamma (GABRG1-3), delta (GABRD), epsilon (GABRE), rho (GABRR1-3), pi (GABRP) and theta (GABRQ) chains, each subunit exhibiting distinct physiological and pharmacological properties. Binds UBQLN1.

Its subcellular location is the postsynaptic cell membrane. It is found in the cell membrane. The enzyme catalyses chloride(in) = chloride(out). Potentiated by histamine. Its function is as follows. Beta subunit of the heteropentameric ligand-gated chloride channel gated by gamma-aminobutyric acid (GABA), a major inhibitory neurotransmitter in the brain. GABA-gated chloride channels, also named GABA(A) receptors (GABAAR), consist of five subunits arranged around a central pore and contain GABA active binding site(s) located at the alpha and beta subunit interface(s). When activated by GABA, GABAARs selectively allow the flow of chloride anions across the cell membrane down their electrochemical gradient. Chloride influx into the postsynaptic neuron following GABAAR opening decreases the neuron ability to generate a new action potential, thereby reducing nerve transmission. Beta-containing GABAARs can simultaneously bind GABA and histamine where histamine binds at the interface of two neighboring beta subunits, which may be involved in the regulation of sleep and wakefulness. This Rattus norvegicus (Rat) protein is Gamma-aminobutyric acid receptor subunit beta-1.